The sequence spans 1489 residues: DNA-directed RNA polymerase subunit beta (1489 aa).

The protein belongs to the RNA polymerase beta chain family. The RNAP catalytic core consists of 2 alpha, 1 beta, 1 beta' and 1 omega subunit. When a sigma factor is associated with the core the holoenzyme is formed, which can initiate transcription.

The catalysed reaction is RNA(n) + a ribonucleoside 5'-triphosphate = RNA(n+1) + diphosphate. In terms of biological role, DNA-dependent RNA polymerase catalyzes the transcription of DNA into RNA using the four ribonucleoside triphosphates as substrates. The polypeptide is DNA-directed RNA polymerase subunit beta (Koribacter versatilis (strain Ellin345)).